We begin with the raw amino-acid sequence, 362 residues long: 3-dehydroquinate synthase (362 aa).

Residues 72–77 (DGEQYK), 106–110 (GVVGD), 130–131 (TT), K143, K152, and 170–173 (CLKT) contribute to the NAD(+) site. Zn(2+) contacts are provided by E185, H248, and H265.

This sequence belongs to the sugar phosphate cyclases superfamily. Dehydroquinate synthase family. It depends on Co(2+) as a cofactor. Requires Zn(2+) as cofactor. The cofactor is NAD(+).

It is found in the cytoplasm. The catalysed reaction is 7-phospho-2-dehydro-3-deoxy-D-arabino-heptonate = 3-dehydroquinate + phosphate. It participates in metabolic intermediate biosynthesis; chorismate biosynthesis; chorismate from D-erythrose 4-phosphate and phosphoenolpyruvate: step 2/7. Catalyzes the conversion of 3-deoxy-D-arabino-heptulosonate 7-phosphate (DAHP) to dehydroquinate (DHQ). The sequence is that of 3-dehydroquinate synthase from Aliivibrio salmonicida (strain LFI1238) (Vibrio salmonicida (strain LFI1238)).